The following is a 124-amino-acid chain: MTKTKGEKINKSAINEVVTRECTIHLAKRVHNIGFKKRAPRAIKEIRKFAEREMGTTDVRIDTRLNKHIWSKGIRSTPFRIRVRLARRRNDDEDSPNKLYTYVTYVPVSTFKNLQTENVESSDD.

At Y102 the chain carries Phosphotyrosine.

The protein belongs to the eukaryotic ribosomal protein eL31 family.

This chain is Large ribosomal subunit protein eL31 (RpL31), found in Drosophila melanogaster (Fruit fly).